We begin with the raw amino-acid sequence, 645 residues long: 1,4-alpha-glucan branching enzyme GlgB (645 aa).

Catalysis depends on Asp-309, which acts as the Nucleophile. The Proton donor role is filled by Glu-352. The interval 619–645 (VKTRKGSKKQDGSKTKVRSNVTSRGKR) is disordered. The span at 636–645 (RSNVTSRGKR) shows a compositional bias: polar residues.

Belongs to the glycosyl hydrolase 13 family. GlgB subfamily. In terms of assembly, monomer.

It catalyses the reaction Transfers a segment of a (1-&gt;4)-alpha-D-glucan chain to a primary hydroxy group in a similar glucan chain.. It participates in glycan biosynthesis; glycogen biosynthesis. Its function is as follows. Catalyzes the formation of the alpha-1,6-glucosidic linkages in glycogen by scission of a 1,4-alpha-linked oligosaccharide from growing alpha-1,4-glucan chains and the subsequent attachment of the oligosaccharide to the alpha-1,6 position. The chain is 1,4-alpha-glucan branching enzyme GlgB from Bacillus cereus (strain ATCC 10987 / NRS 248).